Reading from the N-terminus, the 226-residue chain is Ribose-5-phosphate isomerase A (226 aa).

Substrate contacts are provided by residues 28-31 (TGST), 83-86 (DGAD), and 97-100 (KGGG). The active-site Proton acceptor is Glu106. Lys124 contributes to the substrate binding site.

This sequence belongs to the ribose 5-phosphate isomerase family. As to quaternary structure, homotetramer.

It carries out the reaction aldehydo-D-ribose 5-phosphate = D-ribulose 5-phosphate. It functions in the pathway carbohydrate biosynthesis; D-ribose 5-phosphate biosynthesis. Its function is as follows. Catalyzes the reversible conversion of ribose-5-phosphate to ribulose 5-phosphate. In Methanocaldococcus jannaschii (strain ATCC 43067 / DSM 2661 / JAL-1 / JCM 10045 / NBRC 100440) (Methanococcus jannaschii), this protein is Ribose-5-phosphate isomerase A.